A 59-amino-acid polypeptide reads, in one-letter code: Large ribosomal subunit protein uL30 (59 aa).

It belongs to the universal ribosomal protein uL30 family. Part of the 50S ribosomal subunit.

In Listeria innocua serovar 6a (strain ATCC BAA-680 / CLIP 11262), this protein is Large ribosomal subunit protein uL30.